The chain runs to 162 residues: Ribonuclease H (162 aa).

One can recognise an RNase H type-1 domain in the interval 1–141; sequence MKRIEIFTDG…ADALARAGMA (141 aa). D9, E47, D69, and D133 together coordinate Mg(2+). The tract at residues 139-162 is disordered; the sequence is GMAPFKKKKGGDTASSEEGSARRR.

This sequence belongs to the RNase H family. Monomer. Mg(2+) serves as cofactor.

The protein resides in the cytoplasm. The catalysed reaction is Endonucleolytic cleavage to 5'-phosphomonoester.. Its function is as follows. Endonuclease that specifically degrades the RNA of RNA-DNA hybrids. In Chelativorans sp. (strain BNC1), this protein is Ribonuclease H.